Consider the following 234-residue polypeptide: uncharacterized protein (234 aa).

This is an uncharacterized protein from Escherichia coli (strain K12).